The chain runs to 296 residues: Ribosomal RNA small subunit methyltransferase A (296 aa).

6 residues coordinate S-adenosyl-L-methionine: Asn30, Leu32, Gly57, Glu78, Asp103, and Asn128.

It belongs to the class I-like SAM-binding methyltransferase superfamily. rRNA adenine N(6)-methyltransferase family. RsmA subfamily.

Its subcellular location is the cytoplasm. The enzyme catalyses adenosine(1518)/adenosine(1519) in 16S rRNA + 4 S-adenosyl-L-methionine = N(6)-dimethyladenosine(1518)/N(6)-dimethyladenosine(1519) in 16S rRNA + 4 S-adenosyl-L-homocysteine + 4 H(+). Functionally, specifically dimethylates two adjacent adenosines (A1518 and A1519) in the loop of a conserved hairpin near the 3'-end of 16S rRNA in the 30S particle. May play a critical role in biogenesis of 30S subunits. The chain is Ribosomal RNA small subunit methyltransferase A from Staphylococcus haemolyticus (strain JCSC1435).